The following is a 372-amino-acid chain: Chaperone protein DnaJ (372 aa).

Positions aspartate 5 to glycine 70 constitute a J domain. A CR-type zinc finger spans residues glycine 134–lysine 211. Positions 147, 150, 163, 166, 185, 188, 199, and 202 each coordinate Zn(2+). CXXCXGXG motif repeat units lie at residues cysteine 147–glycine 154, cysteine 163–glycine 170, cysteine 185–glycine 192, and cysteine 199–glycine 206.

Belongs to the DnaJ family. As to quaternary structure, homodimer. Zn(2+) is required as a cofactor.

It is found in the cytoplasm. Its function is as follows. Participates actively in the response to hyperosmotic and heat shock by preventing the aggregation of stress-denatured proteins and by disaggregating proteins, also in an autonomous, DnaK-independent fashion. Unfolded proteins bind initially to DnaJ; upon interaction with the DnaJ-bound protein, DnaK hydrolyzes its bound ATP, resulting in the formation of a stable complex. GrpE releases ADP from DnaK; ATP binding to DnaK triggers the release of the substrate protein, thus completing the reaction cycle. Several rounds of ATP-dependent interactions between DnaJ, DnaK and GrpE are required for fully efficient folding. Also involved, together with DnaK and GrpE, in the DNA replication of plasmids through activation of initiation proteins. This is Chaperone protein DnaJ from Aliarcobacter butzleri (strain RM4018) (Arcobacter butzleri).